Consider the following 603-residue polypeptide: Conglutin beta 2 (603 aa).

A signal peptide spans 1 to 30; the sequence is MANMRVKFPTLVLLLGIVFLMAVSIGIAYG. Over residues 36 to 105 the composition is skewed to basic and acidic residues; it reads KNHERPQERE…REPSRGREQE (70 aa). Disordered regions lie at residues 36–177, 343–363, and 375–399; these read KNHE…RNPY, DGQEDEEQSRGQEQSHQDQGV, and LRKHAQSSSGKGKPSESGPFNLRSD. Over residues 137–147 the composition is skewed to low complexity; that stretch reads QGSSSSSGRQS. The span at 148–172 shows a compositional bias: basic and acidic residues; it reads GYERREQREEREQQQEQDSRSESRR. Residues 177-335 form the Cupin type-1 1 domain; it reads YYFSYERFQT…TFNTRYEEIQ (159 aa). Residues 381-393 show a composition bias toward low complexity; the sequence is SSSGKGKPSESGP. One can recognise a Cupin type-1 2 domain in the interval 394–554; the sequence is FNLRSDEPIY…TFPGSVEDVE (161 aa). N-linked (GlcNAc...) asparagine glycosylation is present at asparagine 504. The segment covering 564-574 has biased composition (low complexity); sequence YFANAQPQQQQ. Positions 564–583 are disordered; it reads YFANAQPQQQQQREKEGRRG.

The protein belongs to the 7S seed storage protein family. In terms of assembly, component of globulins complexes which accumulate in seeds.

In terms of biological role, seed storage protein. Accumulates during seed development and is hydrolyzed after germination to provide a carbon and nitrogen source for the developing seedling. The sequence is that of Conglutin beta 2 from Lupinus angustifolius (Narrow-leaved blue lupine).